We begin with the raw amino-acid sequence, 318 residues long: Aspartate carbamoyltransferase catalytic subunit (318 aa).

Residues R64 and T65 each contribute to the carbamoyl phosphate site. K92 contacts L-aspartate. Positions 114, 142, and 145 each coordinate carbamoyl phosphate. Residues R176 and R230 each contribute to the L-aspartate site. G271 and P272 together coordinate carbamoyl phosphate.

Belongs to the aspartate/ornithine carbamoyltransferase superfamily. ATCase family. In terms of assembly, heterododecamer (2C3:3R2) of six catalytic PyrB chains organized as two trimers (C3), and six regulatory PyrI chains organized as three dimers (R2).

It catalyses the reaction carbamoyl phosphate + L-aspartate = N-carbamoyl-L-aspartate + phosphate + H(+). It functions in the pathway pyrimidine metabolism; UMP biosynthesis via de novo pathway; (S)-dihydroorotate from bicarbonate: step 2/3. In terms of biological role, catalyzes the condensation of carbamoyl phosphate and aspartate to form carbamoyl aspartate and inorganic phosphate, the committed step in the de novo pyrimidine nucleotide biosynthesis pathway. In Desulfovibrio desulfuricans (strain ATCC 27774 / DSM 6949 / MB), this protein is Aspartate carbamoyltransferase catalytic subunit.